The chain runs to 610 residues: Replication factor C large subunit (610 aa).

55–62 (GPAGIGKT) contacts ATP. 3 stretches are compositionally biased toward basic and acidic residues: residues 467–478 (EKEGNASAEKPE), 502–515 (LPEK…KLPE), and 594–603 (DGSKKAEPKN). The segment at 467–610 (EKEGNASAEK…PKNQKTLFDF (144 aa)) is disordered.

The protein belongs to the activator 1 small subunits family. RfcL subfamily. Heteromultimer composed of small subunits (RfcS) and large subunits (RfcL).

Part of the RFC clamp loader complex which loads the PCNA sliding clamp onto DNA. The chain is Replication factor C large subunit from Methanosarcina mazei (strain ATCC BAA-159 / DSM 3647 / Goe1 / Go1 / JCM 11833 / OCM 88) (Methanosarcina frisia).